A 172-amino-acid chain; its full sequence is MDRAQKQELVTTLTDVFKSTSVVVVAHYSGLTVAQLSRLRRQMKASGATVKVAKNRLAKIALEGSDVAHVSSLLKGPTLIAYSSDPVAAPKVAVDFAKTNDKFVILGGAMGTTALNVDGVKALATLPSLDELRAKLVGLIQAPATKIAQVTTAPAAKLARVFGAYAKQDEAA.

Belongs to the universal ribosomal protein uL10 family. In terms of assembly, part of the ribosomal stalk of the 50S ribosomal subunit. The N-terminus interacts with L11 and the large rRNA to form the base of the stalk. The C-terminus forms an elongated spine to which L12 dimers bind in a sequential fashion forming a multimeric L10(L12)X complex.

Its function is as follows. Forms part of the ribosomal stalk, playing a central role in the interaction of the ribosome with GTP-bound translation factors. The sequence is that of Large ribosomal subunit protein uL10 from Xanthobacter autotrophicus (strain ATCC BAA-1158 / Py2).